We begin with the raw amino-acid sequence, 152 residues long: Putative pre-16S rRNA nuclease (152 aa).

Belongs to the YqgF nuclease family.

Its subcellular location is the cytoplasm. Its function is as follows. Could be a nuclease involved in processing of the 5'-end of pre-16S rRNA. This chain is Putative pre-16S rRNA nuclease, found in Bifidobacterium longum (strain DJO10A).